We begin with the raw amino-acid sequence, 872 residues long: Alanine--tRNA ligase (872 aa).

Residues His567, His571, Cys669, and His673 each coordinate Zn(2+).

This sequence belongs to the class-II aminoacyl-tRNA synthetase family. The cofactor is Zn(2+).

Its subcellular location is the cytoplasm. The enzyme catalyses tRNA(Ala) + L-alanine + ATP = L-alanyl-tRNA(Ala) + AMP + diphosphate. Catalyzes the attachment of alanine to tRNA(Ala) in a two-step reaction: alanine is first activated by ATP to form Ala-AMP and then transferred to the acceptor end of tRNA(Ala). Also edits incorrectly charged Ser-tRNA(Ala) and Gly-tRNA(Ala) via its editing domain. The protein is Alanine--tRNA ligase of Streptococcus agalactiae serotype Ia (strain ATCC 27591 / A909 / CDC SS700).